The sequence spans 917 residues: Auxin response factor 17 (917 aa).

The segment at residues 134-236 (FCKTLTASDT…QLLLGIRRAN (103 aa)) is a DNA-binding region (TF-B3). Positions 571–649 (SVPNALSPFS…RPTAVPVPDP (79 aa)) are disordered. Composition is skewed to low complexity over residues 576 to 594 (LSPF…MTLQ) and 604 to 620 (SYPD…NTST). Residues 786–870 (ATFVKVYKSG…SCIKILSPQE (85 aa)) enclose the PB1 domain.

Belongs to the ARF family. As to quaternary structure, homodimers and heterodimers. In terms of tissue distribution, expressed in roots, culms, leaves and young panicles.

The protein resides in the nucleus. In terms of biological role, auxin response factors (ARFs) are transcriptional factors that bind specifically to the DNA sequence 5'-TGTCTC-3' found in the auxin-responsive promoter elements (AuxREs). This chain is Auxin response factor 17 (ARF17), found in Oryza sativa subsp. japonica (Rice).